A 940-amino-acid polypeptide reads, in one-letter code: Alanine--tRNA ligase (940 aa).

Residues His-581, His-585, Cys-683, and His-687 each coordinate Zn(2+).

It belongs to the class-II aminoacyl-tRNA synthetase family. Zn(2+) is required as a cofactor.

Its subcellular location is the cytoplasm. The catalysed reaction is tRNA(Ala) + L-alanine + ATP = L-alanyl-tRNA(Ala) + AMP + diphosphate. In terms of biological role, catalyzes the attachment of alanine to tRNA(Ala) in a two-step reaction: alanine is first activated by ATP to form Ala-AMP and then transferred to the acceptor end of tRNA(Ala). Also edits incorrectly charged Ser-tRNA(Ala) and Gly-tRNA(Ala) via its editing domain. This chain is Alanine--tRNA ligase, found in Leptospira borgpetersenii serovar Hardjo-bovis (strain L550).